We begin with the raw amino-acid sequence, 135 residues long: Auxin-responsive protein SAUR66 (135 aa).

This sequence belongs to the ARG7 family.

The protein resides in the cell membrane. Its function is as follows. May promote auxin-stimulated organ elongation, such as hypocotyls, stamen filaments and petals. In Arabidopsis thaliana (Mouse-ear cress), this protein is Auxin-responsive protein SAUR66.